The chain runs to 237 residues: N-(5'-phosphoribosyl)anthranilate isomerase (237 aa).

This sequence belongs to the TrpF family.

It carries out the reaction N-(5-phospho-beta-D-ribosyl)anthranilate = 1-(2-carboxyphenylamino)-1-deoxy-D-ribulose 5-phosphate. It functions in the pathway amino-acid biosynthesis; L-tryptophan biosynthesis; L-tryptophan from chorismate: step 3/5. This is N-(5'-phosphoribosyl)anthranilate isomerase (TRP1) from Komagataella pastoris (Yeast).